Reading from the N-terminus, the 505-residue chain is Deoxyguanosinetriphosphate triphosphohydrolase (505 aa).

Positions 66–273 constitute an HD domain; it reads RLTHSMEVQQ…MEAADDISYC (208 aa).

Belongs to the dGTPase family. Type 1 subfamily. As to quaternary structure, homotetramer. Mg(2+) is required as a cofactor.

It catalyses the reaction dGTP + H2O = 2'-deoxyguanosine + triphosphate + H(+). Its function is as follows. dGTPase preferentially hydrolyzes dGTP over the other canonical NTPs. This chain is Deoxyguanosinetriphosphate triphosphohydrolase, found in Escherichia coli O81 (strain ED1a).